Reading from the N-terminus, the 885-residue chain is DNA mismatch repair protein MutS (885 aa).

626-633 (GPNMGGKS) serves as a coordination point for ATP.

The protein belongs to the DNA mismatch repair MutS family.

Its function is as follows. This protein is involved in the repair of mismatches in DNA. It is possible that it carries out the mismatch recognition step. This protein has a weak ATPase activity. This is DNA mismatch repair protein MutS from Burkholderia cenocepacia (strain ATCC BAA-245 / DSM 16553 / LMG 16656 / NCTC 13227 / J2315 / CF5610) (Burkholderia cepacia (strain J2315)).